The chain runs to 657 residues: uncharacterized protein (657 aa).

A Phosphoserine modification is found at serine 114. Disordered regions lie at residues 142–216, 228–248, 291–312, 335–354, and 399–522; these read LASQ…SDEE, SSRE…EEEE, STRS…SHTP, SSPG…EGAD, and AEAS…SGRH. Positions 143 to 169 are enriched in polar residues; sequence ASQNTDKTSQNQARELPVTENNAQNAK. Residues 190-206 are compositionally biased toward basic and acidic residues; sequence AGKERTLQTPKQKEPAR. At serine 213 the chain carries Phosphoserine. Polar residues-rich tracts occupy residues 234 to 243 and 301 to 312; these read TNQGFSSANV and SHVSSDTASHTP. Residues 343–354 are compositionally biased toward acidic residues; that stretch reads ETVDEPVSEGAD. Low complexity predominate over residues 437 to 451; it reads SASSASAIQQDSTSS. The span at 462-484 shows a compositional bias: polar residues; sequence NTVSSAYSEDFENSPSLTASEPT. The segment covering 485 to 495 has biased composition (basic and acidic residues); it reads AHSKESLDRTL. Residues 499–513 are compositionally biased toward polar residues; the sequence is SESSSSVKTDLPQTA.

This is an uncharacterized protein from Homo sapiens (Human).